The sequence spans 247 residues: Carboxy-S-adenosyl-L-methionine synthase (247 aa).

Residues Y39, 64–66 (GCS), 89–90 (DN), 117–118 (DI), N132, and R199 each bind S-adenosyl-L-methionine.

This sequence belongs to the class I-like SAM-binding methyltransferase superfamily. Cx-SAM synthase family. As to quaternary structure, homodimer.

It carries out the reaction prephenate + S-adenosyl-L-methionine = carboxy-S-adenosyl-L-methionine + 3-phenylpyruvate + H2O. In terms of biological role, catalyzes the conversion of S-adenosyl-L-methionine (SAM) to carboxy-S-adenosyl-L-methionine (Cx-SAM). This chain is Carboxy-S-adenosyl-L-methionine synthase, found in Salmonella choleraesuis (strain SC-B67).